The sequence spans 466 residues: 3-isopropylmalate dehydratase large subunit (466 aa).

[4Fe-4S] cluster-binding residues include Cys-347, Cys-407, and Cys-410.

It belongs to the aconitase/IPM isomerase family. LeuC type 1 subfamily. Heterodimer of LeuC and LeuD. [4Fe-4S] cluster serves as cofactor.

The catalysed reaction is (2R,3S)-3-isopropylmalate = (2S)-2-isopropylmalate. It participates in amino-acid biosynthesis; L-leucine biosynthesis; L-leucine from 3-methyl-2-oxobutanoate: step 2/4. Its function is as follows. Catalyzes the isomerization between 2-isopropylmalate and 3-isopropylmalate, via the formation of 2-isopropylmaleate. This is 3-isopropylmalate dehydratase large subunit from Shigella flexneri serotype 5b (strain 8401).